The primary structure comprises 620 residues: Glutathione-regulated potassium-efflux system protein KefC (620 aa).

The next 12 helical transmembrane spans lie at 4 to 24, 26 to 46, 54 to 74, 90 to 110, 114 to 134, 149 to 169, 178 to 198, 218 to 238, 270 to 290, 294 to 314, 327 to 347, and 359 to 379; these read HTLIQALIYLGSAALIVPIAV, LGLGSVLGYLIAGCIIGPWGL, SILHFAEIGVVLMLFIIGLEL, GALQMVICGGLLGLFCMLLGL, VAELIGMTLALSSTAIAMQAM, FAVLLFQDIAAIPLVAMIPLL, MGAFVLSALKVAGALALVVLL, VFSAVALFLVFGFGLLLEEVG, GLLLGLFFIGVGMSIDFGTLI, LRIVILLLGFLIIKIAMLWLI, WFAVLLGQGSEFAFVVFGAAQ, and SLTLAVALSMAATPILLVILN. The region spanning 399-518 is the RCK N-terminal domain; that stretch reads QPRVIIAGFG…AGVEKPERET (120 aa). Positions 597–620 are disordered; the sequence is GWQGTEEGKHTGNMADEPETKPSS.

This sequence belongs to the monovalent cation:proton antiporter 2 (CPA2) transporter (TC 2.A.37) family. KefC subfamily. Homodimer. Interacts with the regulatory subunit KefF.

It is found in the cell inner membrane. In terms of biological role, pore-forming subunit of a potassium efflux system that confers protection against electrophiles. Catalyzes K(+)/H(+) antiport. The sequence is that of Glutathione-regulated potassium-efflux system protein KefC from Escherichia coli O45:K1 (strain S88 / ExPEC).